We begin with the raw amino-acid sequence, 77 residues long: U8-lycotoxin-Ls1p (77 aa).

The first 20 residues, 1–20 (MKLMIFTGLVLFAIVSLIEA), serve as a signal peptide directing secretion. A propeptide spanning residues 21-26 (QAENEK) is cleaved from the precursor.

This sequence belongs to the neurotoxin 19 (CSTX) family. 08 (U8-Lctx) subfamily. Post-translationally, contains 4 disulfide bonds. As to expression, expressed by the venom gland.

The protein resides in the secreted. The polypeptide is U8-lycotoxin-Ls1p (Lycosa singoriensis (Wolf spider)).